A 477-amino-acid polypeptide reads, in one-letter code: Probable cytosolic Fe-S cluster assembly factor CG17683 (477 aa).

8 residues coordinate [4Fe-4S] cluster: Cys23, Cys68, Cys71, Cys74, Cys187, Cys243, Cys395, and Cys399.

Belongs to the NARF family.

Its function is as follows. Component of the cytosolic iron-sulfur (Fe/S) protein assembly machinery. Required for maturation of extramitochondrial Fe/S proteins. The sequence is that of Probable cytosolic Fe-S cluster assembly factor CG17683 from Drosophila melanogaster (Fruit fly).